Consider the following 449-residue polypeptide: Phosphoglucosamine mutase (449 aa).

The active-site Phosphoserine intermediate is the S101. Mg(2+)-binding residues include S101, D242, D244, and D246. The residue at position 101 (S101) is a Phosphoserine.

This sequence belongs to the phosphohexose mutase family. It depends on Mg(2+) as a cofactor. Post-translationally, activated by phosphorylation.

The enzyme catalyses alpha-D-glucosamine 1-phosphate = D-glucosamine 6-phosphate. In terms of biological role, catalyzes the conversion of glucosamine-6-phosphate to glucosamine-1-phosphate. The protein is Phosphoglucosamine mutase of Bradyrhizobium sp. (strain BTAi1 / ATCC BAA-1182).